The following is a 269-amino-acid chain: CCAAT/enhancer-binding protein delta (269 aa).

Disordered stretches follow at residues 1-48 (MSAA…PGAA), 97-133 (PLEL…APGS), and 151-219 (AAGQ…NQEM). At Ser-2 the chain carries N-acetylserine. Composition is skewed to low complexity over residues 36 to 48 (GAEP…PGAA) and 97 to 107 (PLELLPGGPAR). Lys-120 participates in a covalent cross-link: Glycyl lysine isopeptide (Lys-Gly) (interchain with G-Cter in SUMO). The segment covering 155 to 175 (PTPPTSPEPPRSSPRQTPAPG) has biased composition (pro residues). Positions 177-201 (AREKSAGKRGPDRGSPEYRQRRERN) are enriched in basic and acidic residues. Residues 191–254 (SPEYRQRRER…AGLRQFFKQL (64 aa)) form the bZIP domain. Positions 195–222 (RQRRERNNIAVRKSRDKAKRRNQEMQQK) are basic motif. The tract at residues 226-254 (LSAENEKLHQRVEQLTRDLAGLRQFFKQL) is leucine-zipper.

Belongs to the bZIP family. C/EBP subfamily. As to quaternary structure, binds DNA as a homodimer and as a heterodimer. Can form stable heterodimers with CEBPB. Can form stable heterodimers with CEBPA and CEBPE. Directly interacts with SPI1/PU.1; this interaction does not affect DNA-binding properties of each partner. Interacts with PRDM16.

The protein localises to the nucleus. In terms of biological role, transcription activator that recognizes two different DNA motifs: the CCAAT homology common to many promoters and the enhanced core homology common to many enhancers. Important transcription factor regulating the expression of genes involved in immune and inflammatory responses. Transcriptional activator that enhances IL6 transcription alone and as heterodimer with CEBPB. In Homo sapiens (Human), this protein is CCAAT/enhancer-binding protein delta (CEBPD).